Here is a 201-residue protein sequence, read N- to C-terminus: ATP-dependent Clp protease proteolytic subunit 2 (201 aa).

S98 functions as the Nucleophile in the catalytic mechanism. H123 is an active-site residue.

Belongs to the peptidase S14 family. Fourteen ClpP subunits assemble into 2 heptameric rings which stack back to back to give a disk-like structure with a central cavity, resembling the structure of eukaryotic proteasomes.

The protein localises to the cytoplasm. It catalyses the reaction Hydrolysis of proteins to small peptides in the presence of ATP and magnesium. alpha-casein is the usual test substrate. In the absence of ATP, only oligopeptides shorter than five residues are hydrolyzed (such as succinyl-Leu-Tyr-|-NHMec, and Leu-Tyr-Leu-|-Tyr-Trp, in which cleavage of the -Tyr-|-Leu- and -Tyr-|-Trp bonds also occurs).. Cleaves peptides in various proteins in a process that requires ATP hydrolysis. Has a chymotrypsin-like activity. Plays a major role in the degradation of misfolded proteins. The polypeptide is ATP-dependent Clp protease proteolytic subunit 2 (Rhizobium johnstonii (strain DSM 114642 / LMG 32736 / 3841) (Rhizobium leguminosarum bv. viciae)).